Consider the following 258-residue polypeptide: Proliferating cell nuclear antigen (258 aa).

Residues 61-80 mediate DNA binding; that stretch reads RCDHPVTLGMDLTSLSKILR. A Glycyl lysine isopeptide (Lys-Gly) (interchain with G-Cter in SUMO) cross-link involves residue lysine 127. Lysine 164 is covalently cross-linked (Glycyl lysine isopeptide (Lys-Gly) (interchain with G-Cter in SUMO); alternate). Lysine 164 is covalently cross-linked (Glycyl lysine isopeptide (Lys-Gly) (interchain with G-Cter in ubiquitin); alternate).

It belongs to the PCNA family. In terms of assembly, homotrimer. Interacts with RAD30. Interacts with MCM10. Interacts with UBP10. Post-translationally, sumoylated on Lys-164, and to a lesser extent on Lys-127 by the UBC9/SIZ1 complex during S-phase; which impairs ubiquitination and function in DNA repair. Monoubiquitinated on Lys-164 by the UBC2/RAD18 complex upon DNA damage, and then polyubiquitinated through 'Lys-63'-linkage by UBC13/MMS2. Ubiquitination is required for UBC2-mediated DNA repair. In terms of processing, lys-164 is deubiquitinated by UBP10.

The protein localises to the nucleus. Its function is as follows. This protein is an auxiliary protein of DNA polymerase delta and is involved in the control of eukaryotic DNA replication by increasing the polymerase's processibility during elongation of the leading strand. Involved in DNA repair. The polypeptide is Proliferating cell nuclear antigen (POL30) (Saccharomyces cerevisiae (strain ATCC 204508 / S288c) (Baker's yeast)).